The chain runs to 1403 residues: Mannuronan C5-epimerase AlgE1 (1403 aa).

7 PbH1 repeats span residues 133 to 155 (DRDV…DPHE), 157 to 179 (TINL…VADY), 180 to 202 (QVGG…NIVT), 204 to 226 (TNDF…VVQR), 257 to 279 (AHDV…RVYG), 280 to 302 (AQDV…YAEV), and 320 to 359 (TTGT…SIDG). 2 disordered regions span residues 372-395 (STVS…NDAL) and 408-428 (AGDD…GAGR). Hemolysin-type calcium-binding repeat units follow at residues 388 to 403 (GSAG…AHET), 406 to 422 (GQAG…NDIL), 424 to 440 (GGAG…ADTF), 557 to 573 (GYGG…DDIL), 574 to 591 (VGGA…ADVF), 697 to 712 (EGTD…EANE), 716 to 732 (GLDG…DDIL), and 734 to 750 (GGAG…ADTF). PbH1 repeat units lie at residues 977–999 (DRNV…DPHE), 1001–1023 (TINL…VADY), 1024–1046 (LVDS…NIVT), 1048–1070 (TYDF…TIQR), 1101–1123 (TNNV…RLYG), 1124–1146 (TEDV…YPEV), 1163–1185 (TLNT…AVRE), and 1190–1212 (SDYT…QLSG). Hemolysin-type calcium-binding repeat units lie at residues 1227–1243 (GTDG…NDQL), 1244–1261 (YGGA…DDLL), and 1263–1279 (GGAG…ADTF).

This sequence belongs to the D-mannuronate C5-epimerase family. The cofactor is Ca(2+).

The protein resides in the secreted. It catalyses the reaction [(1-&gt;4)-beta-D-mannuronosyl](n) = [alginate](n). It functions in the pathway glycan biosynthesis; alginate biosynthesis. With respect to regulation, inhibited by zinc. Its function is as follows. Converts beta-D-mannuronic acid (M) to alpha-L-guluronic acid (G), producing a polymer with gel-forming capacity, required for the formation of the cyst coat. This chain is Mannuronan C5-epimerase AlgE1, found in Azotobacter vinelandii.